The primary structure comprises 150 residues: Ribonuclease H (150 aa).

An RNase H type-1 domain is found at 3–144 (GEDIVEIYTD…ADALARQGMA (142 aa)). Asp-12, Glu-50, Asp-72, and Asp-136 together coordinate Mg(2+).

The protein belongs to the RNase H family. Monomer. Requires Mg(2+) as cofactor.

The protein resides in the cytoplasm. The enzyme catalyses Endonucleolytic cleavage to 5'-phosphomonoester.. In terms of biological role, endonuclease that specifically degrades the RNA of RNA-DNA hybrids. This Parvibaculum lavamentivorans (strain DS-1 / DSM 13023 / NCIMB 13966) protein is Ribonuclease H.